Consider the following 75-residue polypeptide: Calhepatin (75 aa).

Ser-1 is subject to N-acetylserine. 2 consecutive EF-hand domains span residues 2 to 37 (ADEQ…VHPK) and 38 to 73 (VSRN…LADL). Residues Asp-15, Asp-17, Ser-19, Thr-21, Glu-26, Asp-51, Asn-53, Asp-55, Gln-57, and Glu-62 each contribute to the Ca(2+) site.

Monomer and homodimer. As to expression, liver, and to a much lower level intestine.

Its function is as follows. Binds both calcium and copper, but not zinc. May be involved in calcium signal transduction. The chain is Calhepatin from Lepidosiren paradoxus (South American lungfish).